We begin with the raw amino-acid sequence, 325 residues long: Neural proliferation differentiation and control protein 1 (325 aa).

A signal peptide spans 1 to 34; it reads MATPLPPPSPRHLRLLRLLLSGLVLGAALRGAAA. The interval 138–175 is disordered; it reads QGLELGLPSTPGTPTPTPHTSLGSPVSSDPVHMSPLEP. A helical membrane pass occupies residues 182 to 202; the sequence is GLALVLILAFCVAGAAALSVA. Ser229 is subject to Phosphoserine. A disordered region spans residues 266–290; that stretch reads EPPKELDTASSDEENEDGDFTVYEC. Positions 275 to 284 are enriched in acidic residues; it reads SSDEENEDGD.

This sequence belongs to the NPDC1/cab-1 family. Strongly expressed in adult brain; especially in hippocampus, frontal lobe and temporal lobe.

It is found in the membrane. Suppresses oncogenic transformation in neural and non-neural cells and down-regulates neural cell proliferation. Might be involved in transcriptional regulation. This is Neural proliferation differentiation and control protein 1 (NPDC1) from Homo sapiens (Human).